Consider the following 1945-residue polypeptide: Rho GTPase-activating protein 21 (1945 aa).

Residues 26-53 form a disordered region; the sequence is CEVSKNKDGKDQGEPVSPSEDEPFSWPG. Basic and acidic residues predominate over residues 29–38; it reads SKNKDGKDQG. 2 positions are modified to phosphoserine: Ser-42 and Ser-63. The PDZ domain occupies 56 to 165; that stretch reads TVMLKRTSQG…TLELSVMPKD (110 aa). Disordered regions lie at residues 210 to 229 and 326 to 365; these read TAQPVETCPPDSLPNKQQTS and HQTTGSRSLEPSGILLKSGNYSGHSEGISSSRSQAVDSPP. The segment covering 347–358 has biased composition (low complexity); it reads SGHSEGISSSRS. Ser-454 carries the post-translational modification Phosphoserine. Residues 499–512 show a composition bias toward polar residues; that stretch reads EATATVNSESQIPD. The tract at residues 499-519 is disordered; that stretch reads EATATVNSESQIPDSNGERKQ. Residues Arg-549 and Arg-569 each carry the omega-N-methylarginine modification. Disordered regions lie at residues 573–647 and 674–702; these read PVSQ…RPVN and EVSSCLPGTSAKTSPQLSENLGTSDLELP. The segment covering 589–600 has biased composition (polar residues); that stretch reads SNRNFPTTTGVS. Phosphoserine occurs at positions 610 and 619. A compositionally biased stretch (polar residues) spans 674–696; that stretch reads EVSSCLPGTSAKTSPQLSENLGT. Thr-741 is subject to Phosphothreonine. Residues Ser-851, Ser-856, and Ser-875 each carry the phosphoserine modification. 2 disordered regions span residues 852 to 879 and 902 to 921; these read HDQESVGPPSLDGQHSSKTERSKSYDEG and ITDSQKSSEDSGSRKGSSSE. Over residues 866 to 879 the composition is skewed to basic and acidic residues; sequence HSSKTERSKSYDEG. Phosphotyrosine is present on Tyr-876. 5 positions are modified to phosphoserine: Ser-918, Ser-920, Ser-948, Ser-1093, and Ser-1109. An interaction with ARF1 and ARF6 region spans residues 924-1091; the sequence is SDAAREGWLQ…AKSEPKTQSP (168 aa). The PH domain occupies 925 to 1034; it reads DAAREGWLQF…WIKTIQESSN (110 aa). The interval 1080 to 1120 is disordered; it reads LGAKSEPKTQSPHSPKEESERKLLSKDDTSPPKDKGTWRRG. Positions 1093–1116 are enriched in basic and acidic residues; it reads SPKEESERKLLSKDDTSPPKDKGT. A Rho-GAP domain is found at 1141 to 1333; sequence VRLDDCPPAH…TLIQHHDWFF (193 aa). 4 disordered regions span residues 1373 to 1396, 1412 to 1632, 1649 to 1794, and 1846 to 1945; these read PGDVSDSATSDSAKSKGSWGSGKD, SRKR…PVFP, ARVS…LGGH, and RTSA…ETPP. Residues 1377-1395 are compositionally biased toward low complexity; that stretch reads SDSATSDSAKSKGSWGSGK. Residues Ser-1412, Ser-1426, and Ser-1427 each carry the phosphoserine modification. 2 stretches are compositionally biased toward basic and acidic residues: residues 1435-1457 and 1471-1488; these read FFKKENTEQSHSEIKEESKRESE and SNTKKDSGTTKEEKKIPW. A Glycyl lysine isopeptide (Lys-Gly) (interchain with G-Cter in SUMO) cross-link involves residue Lys-1438. Thr-1504 bears the Phosphothreonine mark. 2 stretches are compositionally biased toward low complexity: residues 1531–1556 and 1569–1589; these read SDSGTLLSTSSQASLLRSSTKKSTSP and TTTSDYSTTSSTTYLTSLDSS. An interaction with CTNNA1 region spans residues 1579–1848; it reads STTYLTSLDS…WLARERVRTS (270 aa). Positions 1590-1599 are enriched in polar residues; it reads RLSPEVQSVA. Residues 1611–1621 show a composition bias toward basic and acidic residues; that stretch reads SELVSEGRPVE. Ser-1656 carries the phosphoserine modification. 2 stretches are compositionally biased toward polar residues: residues 1658-1681 and 1729-1738; these read GSEASCTEGSLTPSLDSRRQQFSS and STGSLLTPSR. The residue at position 1669 (Thr-1669) is a Phosphothreonine. A Phosphoserine modification is found at Ser-1729. Residues 1739-1757 show a composition bias toward basic and acidic residues; the sequence is SESEKQEATWKTKIADRLK. The segment covering 1782–1792 has biased composition (basic residues); the sequence is RKNIKRRHTLG. Polar residues predominate over residues 1871–1882; it reads PISTHSPPSQQP. Residues 1887–1896 are compositionally biased toward low complexity; that stretch reads AATSTLASTS. At Thr-1902 the chain carries Phosphothreonine. A Phosphoserine modification is found at Ser-1906. The span at 1907-1927 shows a compositional bias: polar residues; that stretch reads PDQINRESFQNMSQNASSTAN. Positions 1932–1945 are enriched in basic and acidic residues; the sequence is KQSESPDTKAETPP.

As to quaternary structure, interacts with CTNNA1. Interacts with GTP-bound ARF1 and probably ARF6. Sumoylated with SUMO2 and SUMO3 in proliferating lymphocytes.

The protein localises to the golgi apparatus membrane. The protein resides in the cell junction. It localises to the cytoplasmic vesicle membrane. It is found in the cytoplasm. Its subcellular location is the cytoskeleton. Functions as a GTPase-activating protein (GAP) for RHOA and CDC42. Downstream partner of ARF1 which may control Golgi apparatus structure and function. Also required for CTNNA1 recruitment to adherens junctions. The chain is Rho GTPase-activating protein 21 from Mus musculus (Mouse).